We begin with the raw amino-acid sequence, 88 residues long: Large ribosomal subunit protein bL27 (88 aa).

Residues Met1–Leu21 form a disordered region.

This sequence belongs to the bacterial ribosomal protein bL27 family.

In Parasynechococcus marenigrum (strain WH8102), this protein is Large ribosomal subunit protein bL27.